A 453-amino-acid polypeptide reads, in one-letter code: MKFRSLIKKTSNWLTATPERSLDNAYKAALKIKEIEDNHFGGKKVSKENADYGDSVISYFKTEVNGYLQKINMGLGVFKTSRLFLNISNIQELPQERPTERELQKNATTAAIIFEKLEFIDQVASKYQSRDTQEVYNGSLVLAKESSQDKETQTLDNKSTNQTNSKLSNNNKISSGQNDSRLESASQKTGVLPRSFINTLNKIKQEIDPKSGESEEQVLNKYRKSRLRTALSIKFILLLIIVPLLTHQLTKTFLLTPIIHQYFQNHEQVVFINKDLEEEAFEELSHYEEILRFQGLIGLREPLTDEEVEEKVQEKAREITEEYRAQGIDSIGNVFADLFSVTAFAIVIVSSRKEIEVLKSFLDEILYGLSDPAKAFLIILFTDMFVGFHSPHGWEVILEGVARHFGLPENQEFNFLFIATFPVILDTVLKYWIFRYLNRISPSAVATYKNMNE.

Residues 147–189 form a disordered region; it reads SQDKETQTLDNKSTNQTNSKLSNNNKISSGQNDSRLESASQKT. Polar residues predominate over residues 154–163; sequence TLDNKSTNQT. The segment covering 164–175 has biased composition (low complexity); it reads NSKLSNNNKISS. Polar residues predominate over residues 176-189; sequence GQNDSRLESASQKT. A run of 4 helical transmembrane segments spans residues 235-255, 330-350, 377-397, and 413-433; these read FILLLIIVPLLTHQLTKTFLL, SIGNVFADLFSVTAFAIVIVS, LIILFTDMFVGFHSPHGWEVI, and FNFLFIATFPVILDTVLKYWI.

It belongs to the CemA family.

It is found in the cell inner membrane. Functionally, required for H(+) efflux immediately after light irradiation to form a rapid H(+) concentration gradient across the thylakoid membranes. Together with PxcL, contributes to transient H(+) uptake following dark to light transition. This chain is Proton extrusion protein PxcA, found in Crocosphaera subtropica (strain ATCC 51142 / BH68) (Cyanothece sp. (strain ATCC 51142)).